A 367-amino-acid polypeptide reads, in one-letter code: Glutamate 5-kinase (367 aa).

Lysine 10 is a binding site for ATP. Positions 50, 137, and 149 each coordinate substrate. Residues threonine 169–aspartate 170 and threonine 211–lysine 217 contribute to the ATP site. Residues alanine 275–glutamate 353 enclose the PUA domain.

This sequence belongs to the glutamate 5-kinase family.

The protein localises to the cytoplasm. The catalysed reaction is L-glutamate + ATP = L-glutamyl 5-phosphate + ADP. The protein operates within amino-acid biosynthesis; L-proline biosynthesis; L-glutamate 5-semialdehyde from L-glutamate: step 1/2. With respect to regulation, proline-mediated feedback inhibition. Functionally, catalyzes the transfer of a phosphate group to glutamate to form L-glutamate 5-phosphate. This is Glutamate 5-kinase from Serratia marcescens.